The sequence spans 612 residues: Threonine--tRNA ligase (612 aa).

Residues 218–509 form a catalytic region; the sequence is DHRKLGVELG…LSEHFGGNFP (292 aa). Positions 310, 361, and 486 each coordinate Zn(2+).

It belongs to the class-II aminoacyl-tRNA synthetase family. As to quaternary structure, homodimer. Zn(2+) serves as cofactor.

It is found in the cytoplasm. The enzyme catalyses tRNA(Thr) + L-threonine + ATP = L-threonyl-tRNA(Thr) + AMP + diphosphate + H(+). Its function is as follows. Catalyzes the attachment of threonine to tRNA(Thr) in a two-step reaction: L-threonine is first activated by ATP to form Thr-AMP and then transferred to the acceptor end of tRNA(Thr). Also edits incorrectly charged L-seryl-tRNA(Thr). This chain is Threonine--tRNA ligase, found in Helicobacter pylori (strain HPAG1).